Consider the following 567-residue polypeptide: Methionine--tRNA ligase (567 aa).

Positions 11–21 (PYVQTVPHLGN) match the 'HIGH' region motif. Zn(2+) contacts are provided by cysteine 143, cysteine 146, cysteine 156, and cysteine 159. Residues 331–335 (KFSKS) carry the 'KMSKS' region motif. Position 334 (lysine 334) interacts with ATP.

The protein belongs to the class-I aminoacyl-tRNA synthetase family. MetG type 1 subfamily. Requires Zn(2+) as cofactor.

The protein localises to the cytoplasm. It carries out the reaction tRNA(Met) + L-methionine + ATP = L-methionyl-tRNA(Met) + AMP + diphosphate. Is required not only for elongation of protein synthesis but also for the initiation of all mRNA translation through initiator tRNA(fMet) aminoacylation. The sequence is that of Methionine--tRNA ligase from Pyrobaculum islandicum (strain DSM 4184 / JCM 9189 / GEO3).